The following is a 31-amino-acid chain: Protamine-YI (31 aa).

Residues 1 to 31 (ARRRRSSSRPIRRRRPRRRTTRRRRAGRRRR) form a disordered region.

Testis.

The protein resides in the nucleus. It is found in the chromosome. In terms of biological role, protamines substitute for histones in the chromatin of sperm during the haploid phase of spermatogenesis. They compact sperm DNA into a highly condensed, stable and inactive complex. The sequence is that of Protamine-YI from Clupea harengus (Atlantic herring).